A 130-amino-acid polypeptide reads, in one-letter code: Small ribosomal subunit protein uS11 (130 aa).

The interval 1 to 21 is disordered; sequence MAPQSKRSGGRKQKKHVPNGV. Over residues 8-17 the composition is skewed to basic residues; sequence SGGRKQKKHV.

This sequence belongs to the universal ribosomal protein uS11 family. As to quaternary structure, part of the 30S ribosomal subunit. Interacts with proteins S7 and S18. Binds to IF-3.

Its function is as follows. Located on the platform of the 30S subunit, it bridges several disparate RNA helices of the 16S rRNA. Forms part of the Shine-Dalgarno cleft in the 70S ribosome. The protein is Small ribosomal subunit protein uS11 of Acaryochloris marina (strain MBIC 11017).